Consider the following 411-residue polypeptide: Bifunctional protein GlmU (411 aa).

Residues 1–204 form a pyrophosphorylase region; it reads MDAIILCAGK…NGKLHGIELN (204 aa). Residues 6–9, glutamine 74, and glycine 79 contribute to the UTP site; that span reads LCAG. Threonine 80, glycine 130, asparagine 142, and asparagine 158 together coordinate N-acetyl-alpha-D-glucosamine 1-phosphate. The interval 205–224 is linker; sequence GYWNDIGHPWDVLSANNRFL. Residues 225 to 411 form an N-acetyltransferase region; the sequence is NKIISKVSGK…DELVITKKRN (187 aa). Catalysis depends on histidine 308, which acts as the Proton acceptor. Residues alanine 384 and lysine 401 each contribute to the acetyl-CoA site.

It in the N-terminal section; belongs to the N-acetylglucosamine-1-phosphate uridyltransferase family. This sequence in the C-terminal section; belongs to the transferase hexapeptide repeat family.

The enzyme catalyses N-acetyl-alpha-D-glucosamine 1-phosphate + UTP + H(+) = UDP-N-acetyl-alpha-D-glucosamine + diphosphate. It carries out the reaction alpha-D-glucosamine 1-phosphate + acetyl-CoA = N-acetyl-alpha-D-glucosamine 1-phosphate + CoA + H(+). The protein operates within nucleotide-sugar biosynthesis; UDP-N-acetyl-alpha-D-glucosamine biosynthesis; N-acetyl-alpha-D-glucosamine 1-phosphate from alpha-D-glucosamine 6-phosphate (route II): step 2/2. It participates in nucleotide-sugar biosynthesis; UDP-N-acetyl-alpha-D-glucosamine biosynthesis; UDP-N-acetyl-alpha-D-glucosamine from N-acetyl-alpha-D-glucosamine 1-phosphate: step 1/1. Its function is as follows. Catalyzes the last two sequential reactions in the de novo biosynthetic pathway for UDP-N-acetyl-glucosamine (UDP-GlcNAc). Responsible for the acetylation of GlcN-1-P to GlcNAc-1-P, and for the uridyl transfer from UTP to GlcNAc-1-P, to produce UDP-GlcNAc and pyrophosphate. The protein is Bifunctional protein GlmU of Methanococcus maripaludis (strain C7 / ATCC BAA-1331).